Reading from the N-terminus, the 29-residue chain is Trypsin inhibitor 1 (29 aa).

Intrachain disulfides connect Cys3/Cys20, Cys10/Cys22, and Cys16/Cys28.

The protein belongs to the protease inhibitor I7 (squash-type serine protease inhibitor) family.

It localises to the secreted. Functionally, inhibits trypsin. This chain is Trypsin inhibitor 1, found in Luffa aegyptiaca (Sponge gourd).